We begin with the raw amino-acid sequence, 441 residues long: MPAAALQRRPWVPAASEDHVLSIAADAAARDAASVAVEIERLVAENHRIHDVDGLNLNPATNVMNPAAEALLSRGLGSRPSLGYPGDKYEMGLEAIERIEVVAAELAAEVFGAKFAEVRVSSGALSNLYVFMATCRPGDTIIVPPPSIGGHVTHHAAGAAGLYGLKPVSAPVDADGYTVDVAALAKLAGEVKPKLITIGGSLNLFPHPVPAIREIADGVGAKLLFDAAHLSGMVAGKAWPQPLEQGAHAITMSTYKSLGGPAGGLIVSNDAALMERIDAIAYPGLTANSDAGRTAALARSLLDWKVHGVAYAAAMRETAQALARALDARGLPVFVKARGFTQSHQLAVEAARWGGGQHAAKKIAQGGLLACGIGLPIAPVEGDINGLRLGVPEIVRLGFTPDDMPQLADWIARALEGDAASVAAEVRERRTHLGELRYIVR.

N6-(pyridoxal phosphate)lysine is present on Lys-256.

The protein belongs to the SHMT family. Alpha-methylserine aldolase subfamily. As to quaternary structure, homodimer. Pyridoxal 5'-phosphate is required as a cofactor.

It catalyses the reaction 2-methyl-L-serine = formaldehyde + L-alanine. Catalyzes the reversible interconversion of alpha-methyl-L-serine to L-alanine and formaldehyde. The polypeptide is Alpha-methylserine aldolase (Variovorax paradoxus).